Reading from the N-terminus, the 47-residue chain is Large ribosomal subunit protein eL40 (47 aa).

Belongs to the eukaryotic ribosomal protein eL40 family.

The protein is Large ribosomal subunit protein eL40 of Halobacterium salinarum (strain ATCC 29341 / DSM 671 / R1).